Consider the following 448-residue polypeptide: tRNA(Ile)-lysidine synthase (448 aa).

27–32 (SGGVDS) contributes to the ATP binding site.

This sequence belongs to the tRNA(Ile)-lysidine synthase family.

Its subcellular location is the cytoplasm. It carries out the reaction cytidine(34) in tRNA(Ile2) + L-lysine + ATP = lysidine(34) in tRNA(Ile2) + AMP + diphosphate + H(+). Functionally, ligates lysine onto the cytidine present at position 34 of the AUA codon-specific tRNA(Ile) that contains the anticodon CAU, in an ATP-dependent manner. Cytidine is converted to lysidine, thus changing the amino acid specificity of the tRNA from methionine to isoleucine. In Vibrio campbellii (strain ATCC BAA-1116), this protein is tRNA(Ile)-lysidine synthase.